A 396-amino-acid chain; its full sequence is S-arrestin (396 aa).

This sequence belongs to the arrestin family.

Its function is as follows. Arrestin is one of the major proteins of the ros (retinal rod outer segments); it binds to photoactivated-phosphorylated rhodopsin, thereby apparently preventing the transducin-mediated activation of phosphodiesterase. This is S-arrestin from Lithobates pipiens (Northern leopard frog).